The primary structure comprises 1004 residues: Importin subunit beta-5 (1004 aa).

Residue methionine 1 is modified to N-acetylmethionine. In terms of domain architecture, Importin N-terminal spans 21–100 (AETQLLQWCD…REVLLKLCLN (80 aa)).

This sequence belongs to the importin beta family. As to quaternary structure, interacts with NAP1.

It localises to the cytoplasm. It is found in the nucleus. The protein localises to the nuclear pore complex. Required for nuclear protein import and mediates docking of import substrate to distinct nucleoporins. Serves a receptor for nuclear localization signals. Mediates the nuclear import of TATA-binding protein (TBP) and of histones H2A and H2B. This Saccharomyces cerevisiae (strain ATCC 204508 / S288c) (Baker's yeast) protein is Importin subunit beta-5 (KAP114).